A 420-amino-acid chain; its full sequence is Serine hydroxymethyltransferase (420 aa).

Residues Leu-121 and 125 to 127 (GHL) each bind (6S)-5,6,7,8-tetrahydrofolate. An N6-(pyridoxal phosphate)lysine modification is found at Lys-230. (6S)-5,6,7,8-tetrahydrofolate contacts are provided by residues Glu-246 and 354–356 (SPF).

Belongs to the SHMT family. Homodimer. Requires pyridoxal 5'-phosphate as cofactor.

The protein resides in the cytoplasm. It catalyses the reaction (6R)-5,10-methylene-5,6,7,8-tetrahydrofolate + glycine + H2O = (6S)-5,6,7,8-tetrahydrofolate + L-serine. The protein operates within one-carbon metabolism; tetrahydrofolate interconversion. It functions in the pathway amino-acid biosynthesis; glycine biosynthesis; glycine from L-serine: step 1/1. Its function is as follows. Catalyzes the reversible interconversion of serine and glycine with tetrahydrofolate (THF) serving as the one-carbon carrier. This reaction serves as the major source of one-carbon groups required for the biosynthesis of purines, thymidylate, methionine, and other important biomolecules. Also exhibits THF-independent aldolase activity toward beta-hydroxyamino acids, producing glycine and aldehydes, via a retro-aldol mechanism. This Rickettsia peacockii (strain Rustic) protein is Serine hydroxymethyltransferase.